The sequence spans 209 residues: Small ribosomal subunit protein uS4 (209 aa).

A compositionally biased stretch (basic residues) spans 1–13 (MSTKSRTRSKTRL). 2 disordered regions span residues 1-20 (MSTK…LGIP) and 28-49 (YLEK…QDSD). One can recognise an S4 RNA-binding domain in the interval 95–176 (QRLDALVVRS…PKLPSYLEVE (82 aa)).

It belongs to the universal ribosomal protein uS4 family. As to quaternary structure, part of the 30S ribosomal subunit. Contacts protein S5. The interaction surface between S4 and S5 is involved in control of translational fidelity.

One of the primary rRNA binding proteins, it binds directly to 16S rRNA where it nucleates assembly of the body of the 30S subunit. In terms of biological role, with S5 and S12 plays an important role in translational accuracy. The polypeptide is Small ribosomal subunit protein uS4 (Clavibacter michiganensis subsp. michiganensis (strain NCPPB 382)).